The following is an 804-amino-acid chain: Endoplasmin (804 aa).

The N-terminal stretch at 1 to 21 (MRALWVLGLCCVLLTFGSVRA) is a signal peptide. Positions 42 to 44 (SRT) match the SRT pseudosubstrate motif motif. N-linked (GlcNAc...) asparagine glycosylation is present at Asn62. Ser64 is subject to Phosphoserine. An N-linked (GlcNAc...) asparagine glycan is attached at Asn107. ATP contacts are provided by Asn107, Asp149, and Asn162. An N6-(2-hydroxyisobutyryl)lysine modification is found at Lys168. Ser172 is modified (phosphoserine). Position 199 (Phe199) interacts with ATP. The N-linked (GlcNAc...) asparagine glycan is linked to Asn217. The tract at residues 288-323 (TVEEPAEEEEAAKEDKEESDDEAAVEEEEDEKKPKT) is disordered. Residues 289 to 317 (VEEPAEEEEAAKEDKEESDDEAAVEEEED) are compositionally biased toward acidic residues. Phosphoserine occurs at positions 306 and 403. At Lys404 the chain carries N6-succinyllysine. Asn445 carries an N-linked (GlcNAc...) asparagine glycan. Ser447 carries the phosphoserine modification. Position 479 is an N6-acetyllysine (Lys479). Residues Asn481 and Asn502 are each glycosylated (N-linked (GlcNAc...) asparagine). Lys633 is subject to N6-succinyllysine. Residues 750-804 (DPDAKVEEEPEEEPEETTEDTAEDTEQDEEEEMDAGTDEEEQETAEKSTAEKDEL) are disordered. Positions 757 to 792 (EEPEEEPEETTEDTAEDTEQDEEEEMDAGTDEEEQE) are enriched in acidic residues. Thr786 is modified (phosphothreonine). Basic and acidic residues predominate over residues 793–804 (TAEKSTAEKDEL). Residues 801-804 (KDEL) carry the Prevents secretion from ER motif.

This sequence belongs to the heat shock protein 90 family. In terms of assembly, homodimer; disulfide-linked. Component of an EIF2 complex at least composed of CELF1/CUGBP1, CALR, CALR3, EIF2S1, EIF2S2, HSP90B1 and HSPA5. Part of a large chaperone multiprotein complex comprising DNAJB11, HSP90B1, HSPA5, HYOU, PDIA2, PDIA4, PDIA6, PPIB, SDF2L1, UGGT1 and very small amounts of ERP29, but not, or at very low levels, CALR nor CANX. Interacts with AIMP1; regulates its retention in the endoplasmic reticulum. Hyperglycosylated form interacts with OS9; promoting its degradation by the endoplasmic reticulum associated degradation (ERAD). Interacts with CNPY3. This interaction is disrupted in the presence of ATP. Interacts with TLR4 and TLR9, but not with TLR3. Interacts with MZB1 in a calcium-dependent manner. Interacts with METTL23. Interacts with IL1B; the interaction facilitates cargo translocation into the ERGIC. Interacts with EIF2AK3. In terms of processing, phosphorylated by CK2. N-glycosylated cotranslationally at Asn-217 by STT3A-containing OST-A complex: this glycosylation is constitutive. In response to various stress, 5 additional facultative sites (Asn-62, Asn-107, Asn-445, Asn-481 and Asn-502) can be glycosylated post-translationally by STT3B-containing OST-B complex, leading to a hyperglycosylated form that is degraded by the ER-associated degradation (ERAD) pathway. In normal conditions, the OST-A complex together with CCDC134 prevent glycosylation at facultative sites during protein folding, thereby preventing hyperglycosylation. Mechanistically, nascent HSP90B1 is tethered during translation to a specialized CCDC134-containing translocon that forms a microenvironment for its folding, in which STT3A associates with the SRT pseudosubstrate motif, and prevents access to facultative glycosylation sites until folding is completed, rendering its facultative sites inaccessible to the OST-B complex.

It is found in the endoplasmic reticulum lumen. Its subcellular location is the sarcoplasmic reticulum lumen. The protein localises to the melanosome. The enzyme catalyses ATP + H2O = ADP + phosphate + H(+). In terms of biological role, ATP-dependent chaperone involved in the processing of proteins in the endoplasmic reticulum, regulating their transport. Together with MESD, acts as a modulator of the Wnt pathway by promoting the folding of LRP6, a coreceptor of the canonical Wnt pathway. When associated with CNPY3, required for proper folding of Toll-like receptors. Promotes folding and trafficking of TLR4 to the cell surface. May participate in the unfolding of cytosolic leaderless cargos (lacking the secretion signal sequence) such as the interleukin 1/IL-1 to facilitate their translocation into the ERGIC (endoplasmic reticulum-Golgi intermediate compartment) and secretion; the translocation process is mediated by the cargo receptor TMED10. This Bos taurus (Bovine) protein is Endoplasmin (HSP90B1).